Consider the following 252-residue polypeptide: Ribosomal RNA small subunit methyltransferase J (252 aa).

S-adenosyl-L-methionine is bound by residues 101 to 102, 117 to 118, 153 to 154, and D171; these read RD, ER, and SS.

It belongs to the methyltransferase superfamily. RsmJ family.

It is found in the cytoplasm. The enzyme catalyses guanosine(1516) in 16S rRNA + S-adenosyl-L-methionine = N(2)-methylguanosine(1516) in 16S rRNA + S-adenosyl-L-homocysteine + H(+). In terms of biological role, specifically methylates the guanosine in position 1516 of 16S rRNA. The sequence is that of Ribosomal RNA small subunit methyltransferase J from Salmonella choleraesuis (strain SC-B67).